The chain runs to 315 residues: Ribosomal RNA small subunit methyltransferase H (315 aa).

S-adenosyl-L-methionine is bound by residues 33–35, Asp-52, Phe-84, Asp-106, and Gln-113; that span reads GGH. Positions 294–315 are disordered; it reads SSDELEENNRSHSAKLRVAEKL.

Belongs to the methyltransferase superfamily. RsmH family.

The protein localises to the cytoplasm. The catalysed reaction is cytidine(1402) in 16S rRNA + S-adenosyl-L-methionine = N(4)-methylcytidine(1402) in 16S rRNA + S-adenosyl-L-homocysteine + H(+). Functionally, specifically methylates the N4 position of cytidine in position 1402 (C1402) of 16S rRNA. In Lactobacillus johnsonii (strain CNCM I-12250 / La1 / NCC 533), this protein is Ribosomal RNA small subunit methyltransferase H.